The primary structure comprises 383 residues: Succinyl-diaminopimelate desuccinylase (383 aa).

H79 lines the Zn(2+) pocket. The active site involves D81. D110 contacts Zn(2+). The active-site Proton acceptor is the E141. Zn(2+) is bound by residues E142, E170, and H355.

Belongs to the peptidase M20A family. DapE subfamily. Homodimer. Zn(2+) serves as cofactor. The cofactor is Co(2+).

The enzyme catalyses N-succinyl-(2S,6S)-2,6-diaminopimelate + H2O = (2S,6S)-2,6-diaminopimelate + succinate. It participates in amino-acid biosynthesis; L-lysine biosynthesis via DAP pathway; LL-2,6-diaminopimelate from (S)-tetrahydrodipicolinate (succinylase route): step 3/3. Its function is as follows. Catalyzes the hydrolysis of N-succinyl-L,L-diaminopimelic acid (SDAP), forming succinate and LL-2,6-diaminopimelate (DAP), an intermediate involved in the bacterial biosynthesis of lysine and meso-diaminopimelic acid, an essential component of bacterial cell walls. The protein is Succinyl-diaminopimelate desuccinylase of Helicobacter pylori (strain P12).